A 515-amino-acid polypeptide reads, in one-letter code: Bifunctional purine biosynthesis protein PurH (515 aa).

The 145-residue stretch at Met1–Val145 folds into the MGS-like domain.

The protein belongs to the PurH family.

The enzyme catalyses (6R)-10-formyltetrahydrofolate + 5-amino-1-(5-phospho-beta-D-ribosyl)imidazole-4-carboxamide = 5-formamido-1-(5-phospho-D-ribosyl)imidazole-4-carboxamide + (6S)-5,6,7,8-tetrahydrofolate. It carries out the reaction IMP + H2O = 5-formamido-1-(5-phospho-D-ribosyl)imidazole-4-carboxamide. Its pathway is purine metabolism; IMP biosynthesis via de novo pathway; 5-formamido-1-(5-phospho-D-ribosyl)imidazole-4-carboxamide from 5-amino-1-(5-phospho-D-ribosyl)imidazole-4-carboxamide (10-formyl THF route): step 1/1. It participates in purine metabolism; IMP biosynthesis via de novo pathway; IMP from 5-formamido-1-(5-phospho-D-ribosyl)imidazole-4-carboxamide: step 1/1. In Streptococcus pyogenes serotype M12 (strain MGAS2096), this protein is Bifunctional purine biosynthesis protein PurH.